Here is a 545-residue protein sequence, read N- to C-terminus: E3 ubiquitin-protein ligase ipaH9.8 (545 aa).

An interaction with target proteins region spans residues 1-242 (MLPINNNFSL…YHGPRIYFSM (242 aa)). LRR repeat units follow at residues 57–77 (NSDE…NLPA), 78–99 (QITL…PVTL), 100–117 (KKLY…VLPP), 118–139 (ALES…PDSL), 140–157 (LTMN…SLPQ), 158–179 (ALKN…SEGN), 182–203 (VVRE…ILNL), and 205–228 (NECS…QRLT). Residues 243–250 (SDGQQNTL) form a linker region. Residues 251 to 545 (HRPLADAVTA…SENGSQLHHS (295 aa)) are E3 ubiquitin-protein ligase catalytic domain. In terms of domain architecture, NEL spans 253–545 (PLADAVTAWF…SENGSQLHHS (293 aa)). Cysteine 337 (glycyl thioester intermediate) is an active-site residue.

It belongs to the LRR-containing bacterial E3 ligase family. As to quaternary structure, also interacts with human and mouse U2AF1 (U2AF35). Ubiquitinated in the presence of host E1 ubiquitin-activating enzyme, E2 ubiquitin-conjugating enzyme and ubiquitin.

Its subcellular location is the secreted. It localises to the host cytoplasm. The protein resides in the host nucleus. It catalyses the reaction S-ubiquitinyl-[E2 ubiquitin-conjugating enzyme]-L-cysteine + [acceptor protein]-L-lysine = [E2 ubiquitin-conjugating enzyme]-L-cysteine + N(6)-ubiquitinyl-[acceptor protein]-L-lysine.. With respect to regulation, exists in an autoinhibited state in the absence of substrate protein, due to interactions of the leucine-rich repeats with NEL domain. Is activated upon binding to a substrate protein. In terms of biological role, effector E3 ubiquitin ligase that interferes with host's ubiquitination pathway and modulates the acute inflammatory responses, thus facilitating bacterial colonization within the host cell. Interacts with IKBKG (NEMO) and TNIP1 (ABIN-1), a ubiquitin-binding adapter protein, which results in TNIP1-dependent 'Lys-27'-linked polyubiquitination of IKBKG. Consequently, polyubiquitinated IKBKG undergoes proteasome-dependent degradation, which perturbs NF-kappa-B activation during bacterial infection. Mediates polyubiquitination of host U2AF1, leading to its proteasomal degradation. Catalyzes 'Lys-48'-linked polyubiquitination and subsequent degradation of a subset of host guanylate-binding proteins (GBP1, GBP2, GBP4 and GBP6), thereby suppressing host cell defense. In contrast, host GBP3 and GBP7 are not ubiquitinated by IpaH9.8. Uses UBE2D2 (UBCH5B) as an E2 ubiquitin-conjugating enzyme. This chain is E3 ubiquitin-protein ligase ipaH9.8 (ipaH9.8), found in Shigella sonnei (strain Ss046).